A 745-amino-acid chain; its full sequence is Polyribonucleotide nucleotidyltransferase (745 aa).

Mg(2+) is bound by residues Asp-487 and Asp-493. The KH domain maps to 554–613 (PRIETMQIPTDKIRDVIGTGGKIIREIVEKTGAKINIEDTGIVKIASSDGKAIKAAYNWI). Positions 623–691 (GTIYDGTIVK…ERGKIRLSMK (69 aa)) constitute an S1 motif domain. Residues 695 to 745 (QETGEDLTEKLKAERAERGEPEREERSDRGDRGDRGPRRDRGERRRESSGE) form a disordered region. Residues 701–745 (LTEKLKAERAERGEPEREERSDRGDRGDRGPRRDRGERRRESSGE) show a composition bias toward basic and acidic residues.

Belongs to the polyribonucleotide nucleotidyltransferase family. Mg(2+) is required as a cofactor.

It localises to the cytoplasm. The enzyme catalyses RNA(n+1) + phosphate = RNA(n) + a ribonucleoside 5'-diphosphate. Involved in mRNA degradation. Catalyzes the phosphorolysis of single-stranded polyribonucleotides processively in the 3'- to 5'-direction. The chain is Polyribonucleotide nucleotidyltransferase from Methylorubrum extorquens (strain CM4 / NCIMB 13688) (Methylobacterium extorquens).